The chain runs to 1446 residues: MARRPILLGDQLVLEEDSDETYVPSEQEILDFARVIGIDPIKEPELMWLAREGIEAPLPKGWKPCQNITGDLYYFNFDTGQSIWDHPCDEHYRKLVIQERERWSAPGAIKKKDKKKKKEKKNKKDKETSKSPLVLGSPLALVQAPLWGLAPLRGLGDAPPSALRGSQSVSLGSSADSGHLGEPTLPPQGLKAAACAKGLLASVHEGKNALSLLTLGEETNEEDEEESDNQSVRSSSELLKNLHLDLGALGGNFEYEESPRTSQPDKKDVSLDSDADRPPTPGKLFSQGADSSVASANGSKSQGRGASPWNPQKENENSDPKASSSQMAPELDPGGDQPSRASKKQQAEDPVQAGKEGECRRESAAKEPKEASALENTSDVSEESEIHGHLKDARHSGSEASGPKSFLGLDLGFRSRISEHLLDGDTLSPVLGGGHWEAQGLDQEEQDDSKSSIAEPQSKHTQGSEREHLQSSLHSQATEEGPLQTLEGQPEWKEAEGPGKDSVASPAPLSLLQREQVLSPPASPERAEEKHSQAEELGLEQPEAEETEEKVAVCPSSPVSPEVQTAEPAAPQKLFSEAILKGMELEEDQRLLLEFQKEKPQQLEERLWEEEEEEVCQLYQQKEKSLSLLKAQLQKATAEEKEKEEETKIREEESRRLVCLRAQVQSRTEAFENQIRTEQQAALQRLREEAETLQKAERASLEQKSRRALEQLREQLEAEERSAQAALRAEKEAEKEAALLQLREQLEGERKEAVAGLEKKHSAELEQLCSSLEAKHQEVISSLQKKIEGAQQKEEAQLQESLGWAEQRAHQKVHQVTEYEQELSSLLRDKRQEVEREHERKMDKMKEEHWQEMADARERYEAEERKQRADLLGHLTGELERLRRAHERELESMRQEQDQQLEDLRRRHRDHERKLQDLEVELSSRTKDVKARLAQLNVQEENIRKEKQLLLDAQRQAALEREEATATHQHLEEAKKEHTHLLETKQQLRRTIDDLRVRRVELESQVDLLQAQSQRLQKHLSSLEAEVQRKQDVLKEMAAEMNASPHPEPGLHIEDLRKSLDTNKNQEVSSSLSLSKEEIDLSMESVRQFLSAEGVAVRNAKEFLVRQTRSMRRRQTALKAAQQHWRHELASAQEVDEDLPGTEVLGNMRKNLNEETRHLDEMKSAMRKGHDLLKKKEEKLIQLESSLQEEVSDEDTLKGSSIKKVTFDLSDMDDLSSESLESSPVLHITPTPTSADPNKIHYLSSSLQRISSELNGVLNVLGSLNSQPPPQGLGSQPPPPLFTSSLRSSKNVLDPAYSSQAKLSSLSSITPMSTQWAWDPGQGTKLTSSSSSQTVDDFLLEKWRKYFPSGIPLLSGSPPPPENKLGYVSVSEQLHFLQRSHPRVPRTDGVSIQSLIDSNRKWLEHFRNDPKVQLFSSAPKATTTSNLSNLLQLGLDENNRLNVFHY.

Residues 1-195 (MARRPILLGD…PPQGLKAAAC (195 aa)) are interaction with ATRIP. The 34-residue stretch at 56–89 (APLPKGWKPCQNITGDLYYFNFDTGQSIWDHPCD) folds into the WW domain. Disordered regions lie at residues 106–132 (PGAIKKKDKKKKKEKKNKKDKETSKSP) and 159–185 (PPSALRGSQSVSLGSSADSGHLGEPTL). Residues 109-121 (IKKKDKKKKKEKK) are compositionally biased toward basic residues. Positions 164–176 (RGSQSVSLGSSAD) are enriched in polar residues. Ser202 carries the post-translational modification Phosphoserine. Disordered regions lie at residues 217 to 238 (EETNEEDEEESDNQSVRSSSEL), 250 to 408 (GGNF…SFLG), 424 to 570 (GDTL…EPAA), and 830 to 849 (KRQEVEREHERKMDKMKEEH). Residues 218 to 228 (ETNEEDEEESD) show a composition bias toward acidic residues. A compositionally biased stretch (basic and acidic residues) spans 257–277 (ESPRTSQPDKKDVSLDSDADR). Residues 288–312 (GADSSVASANGSKSQGRGASPWNPQ) show a composition bias toward polar residues. Composition is skewed to basic and acidic residues over residues 355 to 372 (KEGECRRESAAKEPKEAS) and 384 to 397 (SEIHGHLKDARHSG). Positions 451-461 (SSIAEPQSKHT) are enriched in polar residues. Basic and acidic residues-rich tracts occupy residues 490-499 (PEWKEAEGPG) and 525-534 (ERAEEKHSQA). Residues 1143–1197 (EVLGNMRKNLNEETRHLDEMKSAMRKGHDLLKKKEEKLIQLESSLQEEVSDEDTL) adopt a coiled-coil conformation. Positions 1261–1287 (LGSLNSQPPPQGLGSQPPPPLFTSSLR) are disordered. A compositionally biased stretch (pro residues) spans 1267-1281 (QPPPQGLGSQPPPPL). A phosphoserine mark is found at Ser1369 and Ser1371.

Interacts (via N-terminus) with ATRIP. Interacts with ATM, ATR and MDC1. Interacts with XPA (via N-terminus) upon UV irradiation. Interacts with CEP83, CCDC92, TTBK2, DVL3, NPHP3 and weakly with NPHP4. Interacts with DZIP1.

Its subcellular location is the cytoplasm. It localises to the cytoskeleton. The protein localises to the microtubule organizing center. The protein resides in the centrosome. It is found in the centriole. Its subcellular location is the nucleus. In terms of biological role, plays a role in microtubule organization and/or maintenance for the formation of primary cilia (PC), a microtubule-based structure that protrudes from the surface of epithelial cells. Plays a critical role in G2/M checkpoint and nuclear divisions. A key player in the DNA damage-activated ATR/ATM signaling cascade since it is required for the proper phosphorylation of H2AX, RPA, CHEK2 and CHEK1. Plays a critical role in chromosome segregation, acting as a mediator required for the maintenance of genomic stability through modulation of MDC1, RPA and CHEK1. The polypeptide is Centrosomal protein of 164 kDa (Mus musculus (Mouse)).